Reading from the N-terminus, the 281-residue chain is GPN-loop GTPase 3 (281 aa).

GTP is bound at residue 13-18 (GSGKST). The short motif at 70 to 72 (GPN) is the Gly-Pro-Asn (GPN)-loop; involved in dimer interface element. 173–176 (SKMD) contacts GTP. Residues 259 to 281 (VQYGEDEEPKEPKDMDEGDFTAQ) are disordered.

Belongs to the GPN-loop GTPase family. As to quaternary structure, heterodimers with GPN1 or GPN2. Binds to RNA polymerase II (RNAPII).

In terms of biological role, small GTPase required for proper nuclear import of RNA polymerase II and III (RNAPII and RNAPIII). May act at an RNAP assembly step prior to nuclear import. The protein is GPN-loop GTPase 3 of Mycosarcoma maydis (Corn smut fungus).